Reading from the N-terminus, the 510-residue chain is NAD(P) transhydrogenase subunit alpha (510 aa).

The Cytoplasmic segment spans residues 1–401 (MRIGIPRERL…EEKCTCSPWR (401 aa)). NAD(+)-binding positions include 120–122 (RIS), Val-175, 195–197 (DTR), Glu-238, and Leu-257. The next 2 membrane-spanning stretches (helical) occupy residues 402–422 (KYALMALAIILFGWMASVAPK) and 423–443 (EFLGHFTVFALACVVGYYVVW). The Cytoplasmic portion of the chain corresponds to 444–452 (NVSHALHTP). The chain crosses the membrane as a helical span at residues 453–473 (LMSVTNAISGIIVVGALLQIG). Residues 474–476 (QGG) are Periplasmic-facing. The chain crosses the membrane as a helical span at residues 477–497 (WVSFLSFIAVLIASINIFGGF). Residues 498 to 510 (TVTQRMLKMFRKN) are Cytoplasmic-facing.

It belongs to the AlaDH/PNT family. Heterodimer of an alpha (PntA) and a beta (PntB) chain. Alpha subunit serves as the dimerization unit.

It localises to the cell inner membrane. It catalyses the reaction NAD(+) + NADPH + H(+)(in) = NADH + NADP(+) + H(+)(out). The transhydrogenation between NADH and NADP is coupled to respiration and ATP hydrolysis and functions as a proton pump across the membrane. The protein is NAD(P) transhydrogenase subunit alpha (pntA) of Escherichia coli (strain K12).